We begin with the raw amino-acid sequence, 693 residues long: MAAYAQFGYAGYPTANQLTTANTDSQSGHGGGSPLSGTNEASLSPSGGSTATGLTAGPLSPGAVSQSSHHAGHKGLSTSPAEDVVGGDVPVGLSSAAQDLPSRGSCCENGRPIITDPVSGQTVCSCQYDPARLAIGGYSRMALPSGGVGVGVYGGPYPSNEQNPYPSIGVDNSAFYAPLSNPYGIKDTSPSTEMSAWTSASLQSTTGYYSYDPTLAAYGYGPNYDLAARRKNATRESTATLKAWLSEHKKNPYPTKGEKIMLAIITKMTLTQVSTWFANARRRLKKENKMTWEPKNKTEDDDDGMMSDDEKEKDAGDGGKLSTEAFDPGNQLIKSELGKAEKEVDSSGDQKLDLDREPHNLVAMRGLAPYATPPGAHPMHAAYSSYAQSHNTHTHPHPQQMQHHQQQQQQQQNQQQLQHHQMDQPYYHPGGYGQEESGEFAAQKNPLSRDCGIPVPASKPKIWSVADTAACKTPPPTAAYLGQNFYPPSSADQQLPHQPLQQHQQQQLQQLQQQQQHHHHPHHHHPHHSMELGSPLSMMSSYAGGSPYSRIPTAYTEAMGMHLPSSSSSSSSTGKLPPTHIHPAPQRVGFPEIQPDTPPQTPPTMKLNSSGGSSSSSGSSHSSSMHSVTPVTVASMVNILYSNTDSGYGHGHSHGHGHGHGHGLGHGHGLGHGHGHMGVTSNAYLTEGGRSGS.

Disordered regions lie at residues 20-104 (TANT…PSRG), 288-331 (NKMT…PGNQ), 387-453 (AQSH…DCGI), 480-538 (YLGQ…PLSM), 561-627 (MHLP…SMHS), and 648-693 (YGHG…RSGS). Low complexity predominate over residues 41 to 59 (ASLSPSGGSTATGLTAGPL). A DNA-binding region (homeobox; TALE-type) is located at residues 226-288 (LAARRKNATR…NARRRLKKEN (63 aa)). 2 stretches are compositionally biased toward basic and acidic residues: residues 288-298 (NKMTWEPKNKT) and 308-317 (DDEKEKDAGD). Composition is skewed to low complexity over residues 397-419 (HPQQ…QLQH) and 493-515 (QQLP…QQQQ). The span at 516–527 (QHHHHPHHHHPH) shows a compositional bias: basic residues. The span at 609–627 (SSGGSSSSSGSSHSSSMHS) shows a compositional bias: low complexity. Positions 651–675 (GHSHGHGHGHGHGLGHGHGLGHGHG) are enriched in basic residues.

It belongs to the TALE/IRO homeobox family.

Its subcellular location is the nucleus. Its function is as follows. Controls proneural and vein forming genes. Positive transcriptional controller of ac-sc (achaete-scute). May act as an activator that interacts with the transcriptional complex assembled on the ac and sc promoters and participates in transcription initiation. The chain is Homeobox protein caupolican (caup) from Drosophila melanogaster (Fruit fly).